The chain runs to 394 residues: Exodeoxyribonuclease 7 large subunit (394 aa).

It belongs to the XseA family. Heterooligomer composed of large and small subunits.

Its subcellular location is the cytoplasm. The catalysed reaction is Exonucleolytic cleavage in either 5'- to 3'- or 3'- to 5'-direction to yield nucleoside 5'-phosphates.. In terms of biological role, bidirectionally degrades single-stranded DNA into large acid-insoluble oligonucleotides, which are then degraded further into small acid-soluble oligonucleotides. The polypeptide is Exodeoxyribonuclease 7 large subunit (Thermotoga maritima (strain ATCC 43589 / DSM 3109 / JCM 10099 / NBRC 100826 / MSB8)).